The primary structure comprises 253 residues: 5-oxoprolinase subunit A (253 aa).

The protein belongs to the LamB/PxpA family. As to quaternary structure, forms a complex composed of PxpA, PxpB and PxpC.

The catalysed reaction is 5-oxo-L-proline + ATP + 2 H2O = L-glutamate + ADP + phosphate + H(+). In terms of biological role, catalyzes the cleavage of 5-oxoproline to form L-glutamate coupled to the hydrolysis of ATP to ADP and inorganic phosphate. The polypeptide is 5-oxoprolinase subunit A (Chloroflexus aurantiacus (strain ATCC 29364 / DSM 637 / Y-400-fl)).